Reading from the N-terminus, the 227-residue chain is UPF0758 protein LPC_1989 (227 aa).

Positions 102–225 constitute an MPN domain; the sequence is QLSNTQQTYA…YSIFAENKWV (124 aa). Residues H173, H175, and D186 each coordinate Zn(2+). The JAMM motif motif lies at 173-186; the sequence is HNHPSGLSDASQQD.

It belongs to the UPF0758 family.

The polypeptide is UPF0758 protein LPC_1989 (Legionella pneumophila (strain Corby)).